An 861-amino-acid polypeptide reads, in one-letter code: Origin recognition complex subunit 1 (861 aa).

The BAH domain maps to 45–171 (IHIQIGQFVL…EKKFRPLSSE (127 aa)). The interval 183–233 (AAKCQKPVRAKSKSAESPSWTPAEHVAKRIESRHSASKSRQTPTHPLTPRA) is disordered. S199 bears the Phosphoserine mark. The residue at position 203 (T203) is a Phosphothreonine. The segment covering 207-216 (HVAKRIESRH) has biased composition (basic and acidic residues). Residues S252, S255, S273, and S287 each carry the phosphoserine modification. Residues 269-312 (SEITSPSKRSQPDKLQTLSPALKAPEKTRETGLSYTEDDKKASP) form a disordered region. Polar residues predominate over residues 270-287 (EITSPSKRSQPDKLQTLS). Position 326 is an N6-acetyllysine (K326). T337 is subject to Phosphothreonine. S340 carries the post-translational modification Phosphoserine. Disordered stretches follow at residues 360–382 (KRDA…IRRK) and 412–476 (PAAE…QIRS). A phosphoserine mark is found at S417 and S420. The span at 440–456 (SRNLRSSLKSSLHTLTK) shows a compositional bias: low complexity. Residues 457–466 (VPKKSLKPRT) show a composition bias toward basic residues. Residue S478 is modified to Phosphoserine. ATP-binding positions include V500 and 534–542 (GVPGTGKTA). The interval 501–861 (PESLPCREQE…DDVLYALKDE (361 aa)) is necessary and sufficient for ORC complex assembly. D620 and E621 together coordinate Mg(2+). Residues E621, N654, and R720 each contribute to the ATP site.

Belongs to the ORC1 family. Component of ORC, a complex composed of at least 6 subunits: ORC1, ORC2, ORC3, ORC4, ORC5 and ORC6. ORC is regulated in a cell-cycle dependent manner. It is sequentially assembled at the exit from anaphase of mitosis and disassembled as cells enter S phase. Interacts with CDC6 and KAT7/HBO1. Interacts with LRWD1 predominantly during the G1 phase and with less affinity during mitosis, when phosphorylated. Post-translationally, phosphorylated during mitosis.

The protein resides in the nucleus. In terms of biological role, component of the origin recognition complex (ORC) that binds origins of replication. DNA-binding is ATP-dependent. The DNA sequences that define origins of replication have not been identified yet. ORC is required to assemble the pre-replication complex necessary to initiate DNA replication. The polypeptide is Origin recognition complex subunit 1 (ORC1) (Homo sapiens (Human)).